We begin with the raw amino-acid sequence, 180 residues long: ADP ribosylation factor 4 (180 aa).

Glycine 2 is lipidated: N-myristoyl glycine. GTP-binding positions include glycine 24–threonine 31, aspartate 67–glutamine 71, and asparagine 126–aspartate 129.

Belongs to the small GTPase superfamily. Arf family. In terms of tissue distribution, uniformly distributed throughout adults.

Its subcellular location is the golgi apparatus. Functionally, GTP-binding protein involved in protein trafficking; may modulate vesicle budding and uncoating within the Golgi apparatus. In Drosophila melanogaster (Fruit fly), this protein is ADP ribosylation factor 4.